Reading from the N-terminus, the 1138-residue chain is BMP-2-inducible protein kinase (1138 aa).

At serine 13 the chain carries Phosphoserine. Residues 48–313 (VTLEESLAEG…DIFQVSYFAF (266 aa)) form the Protein kinase domain. ATP-binding positions include 54 to 62 (LAEGGFSTV) and lysine 76. Catalysis depends on aspartate 177, which acts as the Proton acceptor. Disordered regions lie at residues 355-435 (TDTI…RVLQ), 638-831 (NRLG…PADA), and 906-1018 (PRSV…EFLT). A compositionally biased stretch (polar residues) spans 358–390 (IGPTETSIAPRQRPKANSTAATSSVLTIQSSAT). A compositionally biased stretch (low complexity) spans 417 to 435 (VLMVQGPPQQPPQQHRVLQ). Residue serine 676 is modified to Phosphoserine. The span at 684–701 (HSPNQKSITANLTKNGGS) shows a compositional bias: polar residues. A compositionally biased stretch (basic and acidic residues) spans 706–715 (KDQRAGKKTS). Serine 733, serine 806, and serine 807 each carry phosphoserine. The span at 787–813 (DKHSSDSECEQAKTKRGDTSSLRRDKP) shows a compositional bias: basic and acidic residues. At threonine 819 the chain carries Phosphothreonine. Serine 908 carries the post-translational modification Phosphoserine. The span at 915 to 926 (TPFQPFSVSASK) shows a compositional bias: polar residues. Residues 951–965 (VKQRSLQKLSSRQRR) are compositionally biased toward basic residues. Serine 1010, serine 1012, serine 1013, serine 1020, serine 1022, serine 1087, and serine 1091 each carry phosphoserine. The segment at 1117 to 1138 (TPQQSQPVELDPFGAAPFPSKQ) is disordered.

Belongs to the protein kinase superfamily. Ser/Thr protein kinase family. Autophosphorylated. In terms of tissue distribution, expressed in osteocytes and osteoblasts.

It is found in the nucleus. It catalyses the reaction L-seryl-[protein] + ATP = O-phospho-L-seryl-[protein] + ADP + H(+). It carries out the reaction L-threonyl-[protein] + ATP = O-phospho-L-threonyl-[protein] + ADP + H(+). Its function is as follows. May be involved in osteoblast differentiation. This chain is BMP-2-inducible protein kinase (Bmp2k), found in Mus musculus (Mouse).